Here is a 301-residue protein sequence, read N- to C-terminus: MPLILGGLAGAAAGYGAAAWLERRKPPPGKDPNIKHASLGVVRLDWHYHPLPGDVGSPDSFEYPVYYRAVPGLTFEICQSGKMSPEIQQNFKDAIEFLDKERGVSVITSDCGFFMWFQKEARLYTSKPVVMSSLALLPSLHAAIGTDGKIAIFSANSTSLGPMHDTVAKECGVDWDEACYVLVGCQDVEGFEAVASGEPLDLEKVTPGIVRKAKQVIAEHPDIHAILMECTQLPPFSDDVRAATGLPVYDAIVSADFFIRGFVDNPRFGLNDWHRPWDGHQEKYKLGDNVQDKEKLLHYKP.

Residues C111 and C230 each act as proton donor/acceptor in the active site.

It belongs to the aspartate/glutamate racemases family. ALMA1 subfamily. Homotetramer.

The enzyme catalyses S,S-dimethyl-beta-propiothetin = acrylate + dimethyl sulfide + H(+). Functionally, mediates cleavage of dimethylsulfoniopropionate (DMSP) into dimethyl sulfide (DMS) and acrylate. DMS is the principal form by which sulfur is transported from oceans to the atmosphere and is a key component of the ocean sulfur cycle. This is Dimethylsulfoniopropionate lyase from Durusdinium sp. clade D (Symbiodinium sp. clade D).